Consider the following 400-residue polypeptide: Argininosuccinate synthase (400 aa).

Position 9–17 (9–17 (AYSGGLDTS)) interacts with ATP. Residue tyrosine 87 participates in L-citrulline binding. Glycine 117 is a binding site for ATP. The L-aspartate site is built by threonine 119, asparagine 123, and aspartate 124. An L-citrulline-binding site is contributed by asparagine 123. The L-citrulline site is built by arginine 127, serine 176, serine 185, glutamate 261, and tyrosine 273.

This sequence belongs to the argininosuccinate synthase family. Type 1 subfamily. As to quaternary structure, homotetramer.

It localises to the cytoplasm. The enzyme catalyses L-citrulline + L-aspartate + ATP = 2-(N(omega)-L-arginino)succinate + AMP + diphosphate + H(+). The protein operates within amino-acid biosynthesis; L-arginine biosynthesis; L-arginine from L-ornithine and carbamoyl phosphate: step 2/3. This Chlorobium luteolum (strain DSM 273 / BCRC 81028 / 2530) (Pelodictyon luteolum) protein is Argininosuccinate synthase.